A 256-amino-acid polypeptide reads, in one-letter code: Type III pantothenate kinase (256 aa).

ATP is bound at residue 6–13 (DIGNTHIV). Position 109-112 (109-112 (GADR)) interacts with substrate. The Proton acceptor role is filled by Asp-111. Asp-132 contributes to the K(+) binding site. Position 135 (Thr-135) interacts with ATP. Thr-186 provides a ligand contact to substrate.

Belongs to the type III pantothenate kinase family. As to quaternary structure, homodimer. Requires NH4(+) as cofactor. K(+) serves as cofactor.

It localises to the cytoplasm. The enzyme catalyses (R)-pantothenate + ATP = (R)-4'-phosphopantothenate + ADP + H(+). It participates in cofactor biosynthesis; coenzyme A biosynthesis; CoA from (R)-pantothenate: step 1/5. In terms of biological role, catalyzes the phosphorylation of pantothenate (Pan), the first step in CoA biosynthesis. The sequence is that of Type III pantothenate kinase from Fusobacterium nucleatum subsp. nucleatum (strain ATCC 25586 / DSM 15643 / BCRC 10681 / CIP 101130 / JCM 8532 / KCTC 2640 / LMG 13131 / VPI 4355).